The chain runs to 328 residues: Delta(3,5)-Delta(2,4)-dienoyl-CoA isomerase, mitochondrial (328 aa).

Residues 1-33 constitute a mitochondrion transit peptide; it reads MAAGIVASRRLRDLLTRRLTGSNYPGLSISLRL. Residues 116–120 and G174 each bind substrate; that span reads AGIDL. N6-succinyllysine is present on K231. S268 carries the post-translational modification Phosphoserine. A Microbody targeting signal motif is present at residues 326 to 328; sequence SKL. K327 bears the N6-acetyllysine mark.

Belongs to the enoyl-CoA hydratase/isomerase family. In terms of assembly, homohexamer.

It localises to the mitochondrion. It is found in the peroxisome. The enzyme catalyses (3E,5Z)-octadienoyl-CoA = (2E,4E)-octadienoyl-CoA. The catalysed reaction is (3E,5Z,8Z,11Z,14Z)-eicosapentaenoyl-CoA = (2E,4E,8Z,11Z,14Z)-eicosapentaenoyl-CoA. The protein operates within lipid metabolism; fatty acid beta-oxidation. Its function is as follows. Isomerization of 3-trans,5-cis-dienoyl-CoA to 2-trans,4-trans-dienoyl-CoA. This chain is Delta(3,5)-Delta(2,4)-dienoyl-CoA isomerase, mitochondrial, found in Homo sapiens (Human).